The sequence spans 556 residues: Phenylalanine--tRNA ligase beta subunit (556 aa).

The region spanning 278-354 is the B5 domain; the sequence is LTPKEFEVSF…IAYGYNNIDP (77 aa). The Mg(2+) site is built by Asp332, Asp338, Glu341, and Asp342.

Belongs to the phenylalanyl-tRNA synthetase beta subunit family. Type 2 subfamily. As to quaternary structure, tetramer of two alpha and two beta subunits. Mg(2+) is required as a cofactor.

It is found in the cytoplasm. It catalyses the reaction tRNA(Phe) + L-phenylalanine + ATP = L-phenylalanyl-tRNA(Phe) + AMP + diphosphate + H(+). The chain is Phenylalanine--tRNA ligase beta subunit from Pyrococcus furiosus (strain ATCC 43587 / DSM 3638 / JCM 8422 / Vc1).